We begin with the raw amino-acid sequence, 65 residues long: Large ribosomal subunit protein bL35 (65 aa).

It belongs to the bacterial ribosomal protein bL35 family.

In Yersinia enterocolitica serotype O:8 / biotype 1B (strain NCTC 13174 / 8081), this protein is Large ribosomal subunit protein bL35.